The primary structure comprises 397 residues: MLGQAVLFTTFLLLRAHQGQDCPDSSEEVVGVSGKPVQLRPSNIQTKDVSVQWKKTEQGSHRKIEILNWYNDGPSWSNVSFSDIYGFDYGDFALSIKSAKLQDSGHYLLEITNTGGKVCNKNFQLLILDHVETPNLKAQWKPWTNGTCQLFLSCLVTKDDNVSYALYRGSTLISNQRNSTHWENQIDASSLHTYTCNVSNRASWANHTLNFTHGCQSVPSNFRFLPFGVIIVILVTLFLGAIICFCVWTKKRKQLQFSPKEPLTIYEYVKDSRASRDQQGCSRASGSPSAVQEDGRGQRELDRRVSEVLEQLPQQTFPGDRGTMYSMIQCKPSDSTSQEKCTVYSVVQPSRKSGSKKRNQNSSLSCTVYEEVGNPWLKAHNPARLSRRELENFDVYS.

Positions 1–19 are cleaved as a signal peptide; it reads MLGQAVLFTTFLLLRAHQG. At 20-226 the chain is on the extracellular side; the sequence is QDCPDSSEEV…SVPSNFRFLP (207 aa). Cys22 and Cys119 form a disulfide bridge. 2 Ig-like domains span residues 22-129 and 131-215; these read CPDS…LILD and VETP…THGC. N-linked (GlcNAc...) asparagine glycans are attached at residues Asn78, Asn145, Asn161, Asn178, Asn197, Asn206, and Asn210. An intrachain disulfide couples Cys154 to Cys196. The helical transmembrane segment at 227–247 threads the bilayer; it reads FGVIIVILVTLFLGAIICFCV. The Cytoplasmic segment spans residues 248 to 397; sequence WTKKRKQLQF…RELENFDVYS (150 aa). The ITSM 1 motif lies at 264 to 269; it reads TIYEYV. Tyr266 carries the post-translational modification Phosphotyrosine. Residues 277-290 are compositionally biased toward polar residues; sequence DQQGCSRASGSPSA. The segment at 277–300 is disordered; that stretch reads DQQGCSRASGSPSAVQEDGRGQRE. Short sequence motifs (ITSM) lie at residues 323-328, 342-347, and 367-372; these read TMYSMI, TVYSVV, and TVYEEV. Position 325 is a phosphotyrosine; by FYN (Tyr325). Position 344 is a phosphotyrosine (Tyr344). At Tyr369 the chain carries Phosphotyrosine; by FYN.

In terms of assembly, interacts with CD48. Interacts (via phosphorylated ITSM 1-4) with SH2D1A/SAP (via SH2 domain); SH2D1A probably mediates association with FYN. Interacts (via phosphorylated ITSM 3) with PTPN11/SHP-2, INPP5D/SHIP1, PTPN6/SHP-1 and CSK; binding of SH2D1A prevents association with PTPN11, PTPN6 and CSK. Interacts weakly (via phosphorylated ITSM 2) with PTPN11 and CSK. Interacts with SH2D1B and SH2D1B2. Interacts with MHC class I proteins; the interaction is proposed to prevent self-killing of NK cells. In terms of processing, N-linked glycosylation is essential for the binding to its ligand CD48. Also O-glycosylated, in contrast, O-linked sialylation has a negative impact on ligand binding. Phosphorylated by FYN and CSK on tyrosine residues following activation. Coligation with inhibitory receptors such as KIR2DL1 inhibits phosphorylation upon contact of NK cells with sensitive target cells. Expressed in natural killer (NK) cells, T cells and dendritic cells.

The protein resides in the membrane. Its subcellular location is the cell membrane. It localises to the membrane raft. Functionally, heterophilic receptor of the signaling lymphocytic activation molecule (SLAM) family; its ligand is CD48. SLAM receptors triggered by homo- or heterotypic cell-cell interactions are modulating the activation and differentiation of a wide variety of immune cells and thus are involved in the regulation and interconnection of both innate and adaptive immune response. Activities are controlled by presence or absence of small cytoplasmic adapter proteins, SH2D1A/SAP and/or SH2D1B/EAT-2. Acts as activating natural killer (NK) cell receptor. Activating function implicates association with SH2D1A and FYN. Downstreaming signaling involves predominantly VAV1, and, to a lesser degree, INPP5D/SHIP1 and CBL. Signal attenuation in the absence of SH2D1A is proposed to be dependent on INPP5D and to a lesser extent PTPN6/SHP-1 and PTPN11/SHP-2. Stimulates NK cell cytotoxicity, production of IFN-gamma and granule exocytosis. Optimal expansion and activation of NK cells seems to be dependent on the engagement of CD244 with CD48 expressed on neighboring NK cells. Regulation of NK cell activity by adapters Sh2d1b and Sh2d1b2 is reported conflictingly. Acts as costimulator in NK activation by enhancing signals by other NK receptors such as NCR3 and NCR1. At early stages of NK cell differentiation may function as an inhibitory receptor possibly ensuring the self-tolerance of developing NK cells. Involved in the regulation of CD8(+) T-cell proliferation; expression on activated T-cells and binding to CD48 provides costimulatory-like function for neighboring T-cells. Inhibits inflammatory responses in dendritic cells (DCs). This Mus musculus (Mouse) protein is Natural killer cell receptor 2B4 (Cd244).